A 462-amino-acid polypeptide reads, in one-letter code: MAKEYSTISRIYGPLMIVEGVKGVAYGEVVEIETEWGEKRKGQVLDARENLAIVQVFEGTRDLDIKTTRVRFTGETLKVPVSMDMLGRIFNGIGKPIDGGPEIIPEDRRDVHGAPLNPVARAYPRDFIQTGISAIDGMNTLVRGQKLPIFSGSGLPHNKLAAQIARQAKVLGEEESFAVVFAAMGITYEEANFFKKSFEETGAIERAVLFLNLADDPAIERIITPRMALTVAEYLAFDYDMHVLVILTDMTNYCEALREISAAREEVPGRRGYPGYMYTDLATIYERAGRVRGKKGSITQMPILTMPDDDITHPIPDLTGYITEGQIVLSRDLHRRGIYPPIDVLPSLSRLMKDGIGKGRTREDHPQLAQQLYAAYAEGRSLRDLVAVVGEEALSETDKKYLEFADRFEREFVAQGYDEDRSIEETLDLGWELLAILPETELKRVKKEMIMKYHPKYRGRSS.

The protein belongs to the ATPase alpha/beta chains family. Has multiple subunits with at least A(3), B(3), C, D, E, F, H, I and proteolipid K(x).

The protein localises to the cell membrane. Component of the A-type ATP synthase that produces ATP from ADP in the presence of a proton gradient across the membrane. The B chain is a regulatory subunit. In Pyrococcus furiosus (strain ATCC 43587 / DSM 3638 / JCM 8422 / Vc1), this protein is A-type ATP synthase subunit B.